Consider the following 998-residue polypeptide: Sensor histidine kinase AruS (998 aa).

Disordered regions lie at residues 27-82, 154-198, and 224-245; these read ERRP…HARA, RQAG…LPAG, and RQHP…RQPR. Low complexity predominate over residues 40-49; it reads GEAAVRRAGL. Residues 161–183 are compositionally biased toward basic residues; sequence HRLHRPRTTHRHAVRRAPGRRRE. Helical transmembrane passes span 264-284 and 395-415; these read VLLF…FFEY and ASLL…SWLF. An HAMP domain is found at 417-473; that stretch reads SLVTRHLWRMSEFAGHIAEGDLQQPLRLDKVDRERDEIDAVAAALEDMRQALRTDRR. The region spanning 513–734 is the Histidine kinase domain; the sequence is TMSHEIRTPL…TFWFEIELAL (222 aa). His516 is subject to Phosphohistidine; by autocatalysis. Residues 751–869 form the Response regulatory domain; that stretch reads EVLLVEDVAL…ELRRALGEVG (119 aa). A 4-aspartylphosphate modification is found at Asp800. An HPt domain is found at 894 to 987; sequence GRHKLAGLLG…RDGAEALRRA (94 aa). His933 bears the Phosphohistidine mark.

Autophosphorylated. Activation may require a sequential transfer of a phosphate group from a His in the primary transmitter domain, to an Asp in the receiver domain and to a His in the secondary transmitter domain.

It localises to the cell membrane. It catalyses the reaction ATP + protein L-histidine = ADP + protein N-phospho-L-histidine.. It functions in the pathway amino-acid degradation; L-arginine degradation [regulation]. Its function is as follows. Member of the two-component regulatory system AruS/AruR, which is involved in the regulation of the arginine transaminase (ATA) pathway in response to exogeneous L-arginine. Probably functions as a sensor kinase that phosphorylates AruR. In Pseudomonas aeruginosa (strain ATCC 15692 / DSM 22644 / CIP 104116 / JCM 14847 / LMG 12228 / 1C / PRS 101 / PAO1), this protein is Sensor histidine kinase AruS (aruS).